A 192-amino-acid chain; its full sequence is Beta-glucosidase (192 aa).

It belongs to the glycosyl hydrolase 3 family.

It carries out the reaction Hydrolysis of terminal, non-reducing beta-D-glucosyl residues with release of beta-D-glucose.. It participates in glycan metabolism; cellulose degradation. This chain is Beta-glucosidase, found in Schizophyllum commune (Split gill fungus).